A 124-amino-acid polypeptide reads, in one-letter code: MRLLVQKVILIYLARYAKSMKEIQYYGPADVLPFARIAEFLWVYVGSALAYVVGVKFMGTVRFILFQIVNNSLRTFAWYLKEVFRLGALALITIARAFCVAHINIIIINQVFFLWEMFELKLYL.

Positions 1–19 (MRLLVQKVILIYLARYAKS) are cleaved as a signal peptide. The next 2 helical transmembrane spans lie at 37–57 (IAEF…GVKF) and 86–108 (LGAL…IIII).

It localises to the membrane. This is an uncharacterized protein from Saccharomyces cerevisiae (strain ATCC 204508 / S288c) (Baker's yeast).